Consider the following 508-residue polypeptide: Anthranilate synthase component 1 (508 aa).

L-tryptophan is bound by residues serine 49 and 282–284; that span reads PYM. Chorismate is bound at residue 317 to 318; that stretch reads GT. Residue glutamate 344 coordinates Mg(2+). Residues tyrosine 432, arginine 452, 466–468, and glycine 468 each bind chorismate; that span reads GAG. Glutamate 481 contributes to the Mg(2+) binding site.

This sequence belongs to the anthranilate synthase component I family. As to quaternary structure, heterotetramer consisting of two non-identical subunits: a beta subunit (TrpG) and a large alpha subunit (TrpE). It depends on Mg(2+) as a cofactor.

It carries out the reaction chorismate + L-glutamine = anthranilate + pyruvate + L-glutamate + H(+). It functions in the pathway amino-acid biosynthesis; L-tryptophan biosynthesis; L-tryptophan from chorismate: step 1/5. With respect to regulation, feedback inhibited by tryptophan. Part of a heterotetrameric complex that catalyzes the two-step biosynthesis of anthranilate, an intermediate in the biosynthesis of L-tryptophan. In the first step, the glutamine-binding beta subunit (TrpG) of anthranilate synthase (AS) provides the glutamine amidotransferase activity which generates ammonia as a substrate that, along with chorismate, is used in the second step, catalyzed by the large alpha subunit of AS (TrpE) to produce anthranilate. In the absence of TrpG, TrpE can synthesize anthranilate directly from chorismate and high concentrations of ammonia. The protein is Anthranilate synthase component 1 (trpE) of Bacillus caldotenax.